The following is a 477-amino-acid chain: Protein DETOXIFICATION 5 (477 aa).

12 helical membrane passes run 38 to 58 (AAPM…SVMV), 72 to 92 (LATA…VGAL), 113 to 133 (FSAI…WFYM), 146 to 166 (ISKV…AQAV), 187 to 207 (AITT…AFGL), 211 to 231 (GAAL…ALYV), 263 to 283 (AAMT…SGLL), 292 to 312 (VLSI…GIGA), 333 to 353 (AVFA…TLLF), 376 to 396 (LSSL…LDGV), 411 to 431 (VVAY…WGHM), and 436 to 456 (LWIG…IVTA).

Belongs to the multi antimicrobial extrusion (MATE) (TC 2.A.66.1) family.

It localises to the membrane. This Arabidopsis thaliana (Mouse-ear cress) protein is Protein DETOXIFICATION 5.